Consider the following 273-residue polypeptide: MISIRDLTYFYPEEDLPALKNISLDIRENEFLVILGRNGSGKSTLARLLNGLLLPSQGKVEVDGWNTADANQIQLIRQRVGLLFSNPDNQLISNQVEEDVAFGPENLGLNTAEIRRRVNDSLRLVSMESYKNSAPAFLSGGQKQKIAIAGVMAMKPRYLVLDEALSMIDPRGKREIMESIRSLHKTEGVVVIMITHDLEEAREADRVVVLEEGEVKTISTPEELFPSRASLLALGLAPLEISHIIAEINRQGILLSTDILDIDKLVEEICHFV.

Positions 2–237 constitute an ABC transporter domain; the sequence is ISIRDLTYFY…RASLLALGLA (236 aa). 36–43 is a binding site for ATP; sequence GRNGSGKS.

It belongs to the ABC transporter superfamily. Energy-coupling factor EcfA family. Forms a stable energy-coupling factor (ECF) transporter complex composed of 2 membrane-embedded substrate-binding proteins (S component), 2 ATP-binding proteins (A component) and 2 transmembrane proteins (T component).

It is found in the cell membrane. Functionally, ATP-binding (A) component of a common energy-coupling factor (ECF) ABC-transporter complex. Unlike classic ABC transporters this ECF transporter provides the energy necessary to transport a number of different substrates. The sequence is that of Energy-coupling factor transporter ATP-binding protein EcfA from Syntrophomonas wolfei subsp. wolfei (strain DSM 2245B / Goettingen).